Reading from the N-terminus, the 474-residue chain is GTPase Der (474 aa).

EngA-type G domains are found at residues 2–166 (LRIA…NVPE) and 212–385 (LKIA…TTVS). Residues 8–15 (GRPNVGKS), 55–59 (DTGGV), 118–121 (NKAD), 218–225 (GRPNVGKS), 265–269 (DTAGL), and 330–333 (NKWD) contribute to the GTP site. In terms of domain architecture, KH-like spans 386 to 470 (SKVPTPVVNK…PFDLEFKEKT (85 aa)).

Belongs to the TRAFAC class TrmE-Era-EngA-EngB-Septin-like GTPase superfamily. EngA (Der) GTPase family. Associates with the 50S ribosomal subunit.

In terms of biological role, GTPase that plays an essential role in the late steps of ribosome biogenesis. The chain is GTPase Der from Chlamydia abortus (strain DSM 27085 / S26/3) (Chlamydophila abortus).